We begin with the raw amino-acid sequence, 287 residues long: ATP synthase gamma chain (287 aa).

Belongs to the ATPase gamma chain family. In terms of assembly, F-type ATPases have 2 components, CF(1) - the catalytic core - and CF(0) - the membrane proton channel. CF(1) has five subunits: alpha(3), beta(3), gamma(1), delta(1), epsilon(1). CF(0) has three main subunits: a, b and c.

The protein resides in the cell membrane. Produces ATP from ADP in the presence of a proton gradient across the membrane. The gamma chain is believed to be important in regulating ATPase activity and the flow of protons through the CF(0) complex. This chain is ATP synthase gamma chain, found in Mycoplasmopsis agalactiae (strain NCTC 10123 / CIP 59.7 / PG2) (Mycoplasma agalactiae).